Here is a 249-residue protein sequence, read N- to C-terminus: tRNA pseudouridine synthase A (249 aa).

Residue aspartate 53 is the Nucleophile of the active site. Tyrosine 111 is a substrate binding site.

The protein belongs to the tRNA pseudouridine synthase TruA family. Homodimer.

It catalyses the reaction uridine(38/39/40) in tRNA = pseudouridine(38/39/40) in tRNA. Formation of pseudouridine at positions 38, 39 and 40 in the anticodon stem and loop of transfer RNAs. The polypeptide is tRNA pseudouridine synthase A (Streptococcus gordonii (strain Challis / ATCC 35105 / BCRC 15272 / CH1 / DL1 / V288)).